Reading from the N-terminus, the 103-residue chain is UPF0145 protein CYA_2258 (103 aa).

The protein belongs to the UPF0145 family.

The protein is UPF0145 protein CYA_2258 of Synechococcus sp. (strain JA-3-3Ab) (Cyanobacteria bacterium Yellowstone A-Prime).